Consider the following 330-residue polypeptide: D-alanine--D-alanine ligase (330 aa).

Residues 122–323 (NRFLSGFGIR…MKEVLCTIIR (202 aa)) form the ATP-grasp domain. Residue 151–206 (IARMGLPLFVKPNVGGSSIATTKVVEAAQLLPAIEQAFSEGEEVMIERLICGTEVT) coordinates ATP. Mg(2+) is bound by residues Asp277, Glu290, and Asn292.

The protein belongs to the D-alanine--D-alanine ligase family. It depends on Mg(2+) as a cofactor. The cofactor is Mn(2+).

The protein localises to the cytoplasm. The catalysed reaction is 2 D-alanine + ATP = D-alanyl-D-alanine + ADP + phosphate + H(+). It participates in cell wall biogenesis; peptidoglycan biosynthesis. Functionally, cell wall formation. The chain is D-alanine--D-alanine ligase from Porphyromonas gingivalis (strain ATCC BAA-308 / W83).